A 60-amino-acid chain; its full sequence is Large ribosomal subunit protein uL30 (60 aa).

This sequence belongs to the universal ribosomal protein uL30 family. As to quaternary structure, part of the 50S ribosomal subunit.

This Ralstonia pickettii (strain 12J) protein is Large ribosomal subunit protein uL30.